A 194-amino-acid chain; its full sequence is PLASMODESMATA CALLOSE-BINDING PROTEIN 2 (194 aa).

A signal peptide spans 1-16 (MAPLVLYLLTLLMAGH). Residues cysteine 22 and cysteine 84 are joined by a disulfide bond. An N-linked (GlcNAc...) asparagine glycan is attached at asparagine 85. Positions 106–116 (SSASGSSGSGS) are enriched in low complexity. The disordered stretch occupies residues 106-140 (SSASGSSGSGSTTVTPGKNSPKGSNSITTFPGGNS). The span at 117-140 (TTVTPGKNSPKGSNSITTFPGGNS) shows a compositional bias: polar residues. An N-linked (GlcNAc...) asparagine glycan is attached at asparagine 154. A lipid anchor (GPI-anchor amidated serine) is attached at serine 171. Residues 172 to 194 (SGFALYYSNNLLLTGFCSLVMML) constitute a propeptide, removed in mature form.

Contains two additional disulfide bonds. As to expression, expressed in the shoot apical region and in young leaves but also detected in the laminar and vasculature of mature leaves.

It is found in the cell membrane. Its subcellular location is the cell junction. The protein localises to the plasmodesma. Functionally, able to bind (1-&gt;3)-beta-D-glucans (laminarin). This chain is PLASMODESMATA CALLOSE-BINDING PROTEIN 2 (PDCB2), found in Arabidopsis thaliana (Mouse-ear cress).